We begin with the raw amino-acid sequence, 450 residues long: MTPTPGEADLTNTPAPRARRSVLSRGSWSETARIAGILRKETVGGAVLLVASAVALVWANSPWAESYFALRDLKIGAEPFGLHLNLTLGTWAADGLLAVFFLVVGLELKREFVAGDLRDPARAALPMAAAVGGMVVPALIFVAVTAPVGDGATRGWAIPTATDIAFAVAVLAVISTHLPAALRTFLLTLAVVDDLLAVTVIAVFYTDEINLTALGLSIVPLALFALCVQRRIRSWWLLLPLGVATWVLVHESGVHATVAGVLLGFTVPVLRSVAAGGPEAGPGLAEHFEHRLRPLSAGVAVPVFAFFAAGVAIGGVSGLTRALSDPITLGIILGLVVGKPVGIFLTTRVLTAVTRANLDDALRWIDVFGVALLAGIGFTVSLLIGDLAYGLGSDRDDFVKVGVLTGSLVAALIAAVLLRVRNRHYRAVWLQETADTDRDGVPDVYQSQRD.

Transmembrane regions (helical) follow at residues valine 43–tryptophan 63, leucine 86–leucine 106, alanine 124–valine 144, glycine 155–serine 175, phenylalanine 185–tyrosine 205, glutamate 208–valine 228, serine 234–valine 254, valine 258–proline 278, valine 299–leucine 319, proline 326–threonine 346, tryptophan 364–isoleucine 384, and phenylalanine 398–leucine 418.

Belongs to the NhaA Na(+)/H(+) (TC 2.A.33) antiporter family.

The protein resides in the cell membrane. It catalyses the reaction Na(+)(in) + 2 H(+)(out) = Na(+)(out) + 2 H(+)(in). Functionally, na(+)/H(+) antiporter that extrudes sodium in exchange for external protons. The chain is Na(+)/H(+) antiporter NhaA 2 from Mycobacterium sp. (strain JLS).